A 452-amino-acid chain; its full sequence is Glutamyl-tRNA(Gln) amidotransferase subunit A (452 aa).

Catalysis depends on charge relay system residues Lys56 and Ser131. Catalysis depends on Ser155, which acts as the Acyl-ester intermediate.

It belongs to the amidase family. GatA subfamily. As to quaternary structure, heterotrimer of A, B and C subunits.

The enzyme catalyses L-glutamyl-tRNA(Gln) + L-glutamine + ATP + H2O = L-glutaminyl-tRNA(Gln) + L-glutamate + ADP + phosphate + H(+). In terms of biological role, allows the formation of correctly charged Gln-tRNA(Gln) through the transamidation of misacylated Glu-tRNA(Gln) in organisms which lack glutaminyl-tRNA synthetase. The reaction takes place in the presence of glutamine and ATP through an activated gamma-phospho-Glu-tRNA(Gln). The chain is Glutamyl-tRNA(Gln) amidotransferase subunit A from Campylobacter hominis (strain ATCC BAA-381 / DSM 21671 / CCUG 45161 / LMG 19568 / NCTC 13146 / CH001A).